Here is a 245-residue protein sequence, read N- to C-terminus: 2-C-methyl-D-erythritol 4-phosphate cytidylyltransferase (245 aa).

Belongs to the IspD/TarI cytidylyltransferase family. IspD subfamily.

The catalysed reaction is 2-C-methyl-D-erythritol 4-phosphate + CTP + H(+) = 4-CDP-2-C-methyl-D-erythritol + diphosphate. Its pathway is isoprenoid biosynthesis; isopentenyl diphosphate biosynthesis via DXP pathway; isopentenyl diphosphate from 1-deoxy-D-xylulose 5-phosphate: step 2/6. Functionally, catalyzes the formation of 4-diphosphocytidyl-2-C-methyl-D-erythritol from CTP and 2-C-methyl-D-erythritol 4-phosphate (MEP). The polypeptide is 2-C-methyl-D-erythritol 4-phosphate cytidylyltransferase (Chloroherpeton thalassium (strain ATCC 35110 / GB-78)).